We begin with the raw amino-acid sequence, 467 residues long: Ammonium transporter Rh type C (467 aa).

Over 1 to 3 (MRL) the chain is Cytoplasmic. Residues 4–24 (RLPVVCFLWEIAMIVLFGIFV) form a helical membrane-spanning segment. The Extracellular portion of the chain corresponds to 25–55 (RYNDEADPHWSEFMKAQNITSDIQNDYYFRY). N-linked (GlcNAc...) asparagine glycosylation is present at asparagine 42. Residues 56–76 (PSFQDVHVMIFVGFGFLMTFL) traverse the membrane as a helical segment. The Cytoplasmic portion of the chain corresponds to 77 to 80 (KRYG). Residues 81 to 101 (FGSVAFNFLLAAFGIQWAILM) traverse the membrane as a helical segment. Residues 102 to 119 (QGWFHTFKNGKILIGVES) lie on the Extracellular side of the membrane. The chain crosses the membrane as a helical span at residues 120–139 (LINADFCVGSVCIAFGAILG). The Cytoplasmic portion of the chain corresponds to 140–145 (KVSPVQ). A helical transmembrane segment spans residues 146–168 (IMVMTLFQVTLFAVNEWILLNLL). At 169–173 (HVNDA) the chain is on the extracellular side. A helical membrane pass occupies residues 174–194 (GGSMTIHTFGAYFGLTVAWIL). Topologically, residues 195 to 213 (NRPRLKQTNDKEGSVYVSD) are cytoplasmic. Residues 214–234 (LFSMIGTLFLWMFWPSFNSAV) form a helical membrane-spanning segment. The Extracellular segment spans residues 235–245 (SYHGDAQHRAA). The chain crosses the membrane as a helical span at residues 246 to 266 (INTYCSLAACVLTTVAISSVV). At 267–271 (NKKGK) the chain is on the cytoplasmic side. The chain crosses the membrane as a helical span at residues 272-292 (LEMVHIQNATLAGGVAVGTAA). The Extracellular segment spans residues 293–295 (EMM). The chain crosses the membrane as a helical span at residues 296 to 316 (LTPYGSLIVGFICGIVSTLGF). The Cytoplasmic segment spans residues 317-337 (TYCSPFLSNKLRLHDTCGIHN). The helical transmembrane segment at 338-358 (LHAMPGLIGGIVGAVTAACAT) threads the bilayer. Over 359–390 (EAVYTADGLKKMFRFEGDYATRTPSMQGGYQA) the chain is Extracellular. The chain crosses the membrane as a helical span at residues 391-411 (AGLCVSLAFGLVGGTVVGCIL). Residues 412-467 (KLPIWGDPSDENCFDDEVYWELPEEDEEEHLGAANQYVTHLPENFKLPDRTEVAFK) are Cytoplasmic-facing.

This sequence belongs to the ammonium transporter (TC 2.A.49) family. Rh subfamily. In terms of assembly, homotrimer.

The protein localises to the apical cell membrane. In terms of biological role, functions as an ammonia transporter. The sequence is that of Ammonium transporter Rh type C (rhcg) from Xenopus tropicalis (Western clawed frog).